The sequence spans 143 residues: Small ribosomal subunit protein uS12 (143 aa).

The residue at position 62 (proline 62) is a Hydroxyproline.

This sequence belongs to the universal ribosomal protein uS12 family. As to quaternary structure, component of the 40S small ribosomal subunit.

The protein localises to the cytoplasm. It is found in the cytosol. It localises to the rough endoplasmic reticulum. This chain is Small ribosomal subunit protein uS12 (rps-23), found in Caenorhabditis elegans.